Here is a 910-residue protein sequence, read N- to C-terminus: Potassium/sodium hyperpolarization-activated cyclic nucleotide-gated channel 1 (910 aa).

The segment at Met-1–Gly-75 is disordered. Topologically, residues Met-1–Arg-131 are cytoplasmic. The helical transmembrane segment at Phe-132–Ile-153 threads the bilayer. Residues Thr-154–Thr-162 lie on the Extracellular side of the membrane. Residues Pro-163–Phe-183 form a helical membrane-spanning segment. The Cytoplasmic segment spans residues Arg-184–Met-204. Residues Asn-205–Phe-225 traverse the membrane as a helical segment. Residues Leu-226–Thr-249 are Extracellular-facing. A helical; Voltage-sensor transmembrane segment spans residues Lys-250–Trp-270. At Glu-271–Val-284 the chain is on the cytoplasmic side. The helical transmembrane segment at Val-285–Leu-307 threads the bilayer. Over Val-308–Gln-333 the chain is Extracellular. N-linked (GlcNAc...) asparagine glycosylation occurs at Asn-327. Positions Tyr-334–Pro-355 form an intramembrane region, pore-forming. Positions Cys-347–Gly-351 match the Selectivity filter motif. Residues Val-356 to Asp-360 are Extracellular-facing. The chain crosses the membrane as a helical span at residues Leu-361–His-381. The Cytoplasmic segment spans residues Ala-382–Leu-910. Residues Gly-528, Glu-529, Cys-531, Arg-538, Thr-539, Arg-579, and Arg-582 each coordinate 3',5'-cyclic AMP. Disordered stretches follow at residues Thr-634–Ala-681, Gln-771–Ser-791, and Gln-865–Leu-910. Positions Thr-639–Ser-680 are enriched in low complexity. Over residues Gly-780–Ser-791 the composition is skewed to polar residues. Residues Arg-875–Ala-885 are compositionally biased toward pro residues. The segment covering Asp-900 to Leu-910 has biased composition (basic and acidic residues).

It belongs to the potassium channel HCN family. As to quaternary structure, homotetramer. Heterotetramer with HCN2. The potassium channel is composed of a homo- or heterotetrameric complex of pore-forming subunits. Interacts with KCNE2. Interacts with the SH3 domain of CSK. In terms of processing, N-glycosylated. Predominantly expressed in brain. Highly expressed in apical dendrites of pyramidal neurons in the cortex, in the layer corresponding to the stratum lacunosum-moleculare in the hippocampus and in axons of basket cells in the cerebellum (at protein level). Expressed in a subset of elongated cells in taste buds.

It localises to the cell membrane. It carries out the reaction Na(+)(in) = Na(+)(out). The enzyme catalyses K(+)(in) = K(+)(out). Activated by cAMP. cAMP binding causes a conformation change that leads to the assembly of an active tetramer and channel opening. Compared to other family members, cAMP has less stimulatory effect on HCN1 because part of the molecules already contain bound cAMP and form homotetramers when cAMP levels are low, this inherent tetramerization in HCN1 results in a weaker response to increased cAMP. In terms of biological role, hyperpolarization-activated ion channel that are permeable to sodium and potassium ions. Exhibits weak selectivity for potassium over sodium ions. Contributes to the native pacemaker currents in heart (If) and in neurons (Ih). Participates in cerebellar mechanisms of motor learning. May mediate responses to sour stimuli. In Mus musculus (Mouse), this protein is Potassium/sodium hyperpolarization-activated cyclic nucleotide-gated channel 1 (Hcn1).